A 391-amino-acid chain; its full sequence is Phosphoglycerate kinase (391 aa).

Substrate-binding positions include 21–23 (DLN), R36, 59–62 (HRGR), R113, and R146. ATP is bound by residues K197, E314, and 340–343 (GGDT).

This sequence belongs to the phosphoglycerate kinase family. In terms of assembly, monomer.

The protein resides in the cytoplasm. It carries out the reaction (2R)-3-phosphoglycerate + ATP = (2R)-3-phospho-glyceroyl phosphate + ADP. It participates in carbohydrate degradation; glycolysis; pyruvate from D-glyceraldehyde 3-phosphate: step 2/5. The protein is Phosphoglycerate kinase of Ruthia magnifica subsp. Calyptogena magnifica.